Reading from the N-terminus, the 208-residue chain is Coiled-coil domain-containing protein 25 (208 aa).

Residues 1-105 lie on the Extracellular side of the membrane; that stretch reads MVFYFTSSSV…SNLKKTADMD (105 aa). Residues 21-25 form a DNA-binding region; it reads KDKYE. The residue at position 23 (Lys-23) is an N6-acetyllysine. A helical transmembrane segment spans residues 106-122; the sequence is VGQIGFHRQKDVKIVTV. Residues 117 to 187 adopt a coiled-coil conformation; sequence VKIVTVEKKV…REMDELRSYS (71 aa). At 123–208 the chain is on the cytoplasmic side; that stretch reads EKKVNEILNR…QDGNDSDEFM (86 aa). Residues 145–184 show a composition bias toward basic and acidic residues; the sequence is EAEKECRDHEERNEKKAQIQEMKRREKEEMKKKREMDELR. Positions 145-208 are disordered; the sequence is EAEKECRDHE…QDGNDSDEFM (64 aa). Phosphoserine is present on Ser-204.

Belongs to the CCDC25 family. Interacts (via cytoplasmic region) with ILK.

Its subcellular location is the cell membrane. It localises to the endomembrane system. Functionally, transmembrane receptor that senses neutrophil extracellular traps (NETs) and triggers the ILK-PARVB pathway to enhance cell motility. NETs are mainly composed of DNA fibers and are released by neutrophils to bind pathogens during inflammation. Formation of NETs is also associated with cancer metastasis, NET-DNA acting as a chemotactic factor to attract cancer cells. Specifically binds NETs on its extracellular region, in particular the 8-OHdG-enriched DNA present in NETs, and recruits ILK, initiating the ILK-PARVB cascade to induce cytoskeleton rearrangement and directional migration of cells. The protein is Coiled-coil domain-containing protein 25 of Bos taurus (Bovine).